Here is a 191-residue protein sequence, read N- to C-terminus: Molybdenum cofactor guanylyltransferase (191 aa).

GTP-binding positions include 13–15 (LAG), lysine 26, aspartate 72, and aspartate 102. Aspartate 102 contacts Mg(2+).

This sequence belongs to the MobA family. As to quaternary structure, monomer. Mg(2+) is required as a cofactor.

It localises to the cytoplasm. It catalyses the reaction Mo-molybdopterin + GTP + H(+) = Mo-molybdopterin guanine dinucleotide + diphosphate. Functionally, transfers a GMP moiety from GTP to Mo-molybdopterin (Mo-MPT) cofactor (Moco or molybdenum cofactor) to form Mo-molybdopterin guanine dinucleotide (Mo-MGD) cofactor. This Pseudomonas putida (strain ATCC 47054 / DSM 6125 / CFBP 8728 / NCIMB 11950 / KT2440) protein is Molybdenum cofactor guanylyltransferase.